We begin with the raw amino-acid sequence, 447 residues long: Phosphoglucosamine mutase (447 aa).

The Phosphoserine intermediate role is filled by S88. 4 residues coordinate Mg(2+): S88, D231, D233, and D235. S88 is subject to Phosphoserine.

The protein belongs to the phosphohexose mutase family. Mg(2+) serves as cofactor. Post-translationally, activated by phosphorylation.

The catalysed reaction is alpha-D-glucosamine 1-phosphate = D-glucosamine 6-phosphate. Its function is as follows. Catalyzes the conversion of glucosamine-6-phosphate to glucosamine-1-phosphate. In Methanococcus maripaludis (strain C5 / ATCC BAA-1333), this protein is Phosphoglucosamine mutase.